A 319-amino-acid chain; its full sequence is 4-diphosphocytidyl-2-C-methyl-D-erythritol kinase (319 aa).

Residue Lys-18 is part of the active site. Position 103-113 (Pro-103–Thr-113) interacts with ATP. The active site involves Asp-145.

The protein belongs to the GHMP kinase family. IspE subfamily.

The catalysed reaction is 4-CDP-2-C-methyl-D-erythritol + ATP = 4-CDP-2-C-methyl-D-erythritol 2-phosphate + ADP + H(+). It functions in the pathway isoprenoid biosynthesis; isopentenyl diphosphate biosynthesis via DXP pathway; isopentenyl diphosphate from 1-deoxy-D-xylulose 5-phosphate: step 3/6. In terms of biological role, catalyzes the phosphorylation of the position 2 hydroxy group of 4-diphosphocytidyl-2C-methyl-D-erythritol. The polypeptide is 4-diphosphocytidyl-2-C-methyl-D-erythritol kinase (Prochlorococcus marinus (strain NATL2A)).